A 418-amino-acid chain; its full sequence is Cytochrome P450 monooxygenase ABA2 (418 aa).

Cysteine 355 contacts heme.

This sequence belongs to the cytochrome P450 family. Heme is required as a cofactor.

It participates in hormone biosynthesis. In terms of biological role, cytochrome P450 monooxygenase involved in the biosynthesis of abscisic acid (ABA), a phytohormone that acts antagonistically toward salicylic acid (SA), jasmonic acid (JA) and ethylene (ETH) signaling, to impede plant defense responses. During pathogen-host interaction, ABA plays a dual role in disease severity by increasing plant susceptibility and accelerating pathogenesis in the fungus itself. The first step of the pathway catalyzes the reaction from farnesyl diphosphate to alpha-ionylideneethane performed by the alpha-ionylideneethane synthase ABA3 via a three-step reaction mechanism involving 2 neutral intermediates, beta-farnesene and allofarnesene. The cytochrome P450 monooxygenase ABA1 might then be involved in the conversion of alpha-ionylideneethane to alpha-ionylideneacetic acid. Alpha-ionylideneacetic acid is further converted to abscisic acid in 2 steps involving the cytochrome P450 monooxygenase ABA2 and the short-chain dehydrogenase/reductase ABA4, via the intermediates 1'-deoxy-ABA or 1',4'-trans-diol-ABA, depending on the order of action of these 2 enzymes. ABA2 is responsible for the hydroxylation of carbon atom C-1' and ABA4 might be involved in the oxidation of the C-4' carbon atom. The chain is Cytochrome P450 monooxygenase ABA2 from Pyricularia oryzae (strain Y34) (Rice blast fungus).